The following is a 974-amino-acid chain: Ovochymase-2 (974 aa).

A signal peptide spans 1 to 21; sequence MAETSIFPIMMLTVMIGVGRG. A propeptide spans 22 to 49 (activation peptide); that stretch reads VTDSPGRVSRCGERPAANTSVSYGLLSR. An N-linked (GlcNAc...) asparagine glycan is attached at asparagine 39. Residues 50-299 form the Peptidase S1 1 domain; sequence IVGGTSAVKG…LLNWLSENLN (250 aa). A disulfide bridge connects residues cysteine 75 and cysteine 91. Histidine 90 serves as the catalytic Charge relay system. Ca(2+) is bound by residues valine 112 and glutamate 117. The active-site Charge relay system is the aspartate 140. 11 disulfides stabilise this stretch: cysteine 174–cysteine 244, cysteine 205–cysteine 223, cysteine 234–cysteine 263, cysteine 312–cysteine 342, cysteine 369–cysteine 388, cysteine 435–cysteine 462, cysteine 489–cysteine 510, cysteine 615–cysteine 631, cysteine 713–cysteine 776, cysteine 741–cysteine 754, and cysteine 766–cysteine 795. Catalysis depends on serine 238, which acts as the Charge relay system. CUB domains lie at 312–425 and 435–547; these read CSTN…YEAV and CGSV…ISFV. Residues 590-819 enclose the Peptidase S1 2 domain; it reads LIKAEEAMPN…FIPWIMETIL (230 aa). A propeptide spans 590 to 974 (activation peptide); the sequence is LIKAEEAMPN…WLSYSFHNQN (385 aa). Asparagine 763 is a glycosylation site (N-linked (GlcNAc...) asparagine). Positions 830–858 are disordered; sequence EPHHPLFPPDKPSQQKALLPDSPPSSSSQ. Asparagine 926 is a glycosylation site (N-linked (GlcNAc...) asparagine).

It belongs to the peptidase S1 family. The catalytically inactive 107 kDa form is processed both N- and C-terminally to give rise to the 66 kDa catalytically active form and inactive forms of 82 kDa and 59 kDa. In terms of tissue distribution, expressed specifically in the cells lining the bottom of epithelial folds in the oviductal pars recta.

The protein localises to the secreted. It carries out the reaction Preferential cleavage at 371-Gly-Ser-Arg-|-Trp-374 of glycoprotein gp43 in Xenopus laevis coelemic egg envelope to yield gp41.. Mediates gamete interaction by affecting the vitelline coat. This Bufo japonicus (Japanese common toad) protein is Ovochymase-2 (OVCH2).